Here is a 546-residue protein sequence, read N- to C-terminus: Chaperonin GroEL (546 aa).

Residues 30-33 (TLGP), Lys51, 87-91 (DGTTT), Gly415, 479-481 (NAA), and Asp495 each bind ATP.

The protein belongs to the chaperonin (HSP60) family. Forms a cylinder of 14 subunits composed of two heptameric rings stacked back-to-back. Interacts with the co-chaperonin GroES.

The protein resides in the cytoplasm. It catalyses the reaction ATP + H2O + a folded polypeptide = ADP + phosphate + an unfolded polypeptide.. Its function is as follows. Together with its co-chaperonin GroES, plays an essential role in assisting protein folding. The GroEL-GroES system forms a nano-cage that allows encapsulation of the non-native substrate proteins and provides a physical environment optimized to promote and accelerate protein folding. The protein is Chaperonin GroEL of Allochromatium vinosum (Chromatium vinosum).